Here is a 387-residue protein sequence, read N- to C-terminus: S-adenosylmethionine synthase (387 aa).

Position 8 (Glu8) interacts with Mg(2+). His14 serves as a coordination point for ATP. Glu42 contacts K(+). Glu55 and Gln98 together coordinate L-methionine. Residues Asp166–Lys168, Ser234–Phe237, Asp245, Arg251–Lys252, Ala268, Lys272, and Lys276 each bind ATP. Asp245 lines the L-methionine pocket. Lys276 provides a ligand contact to L-methionine.

The protein belongs to the AdoMet synthase family. As to quaternary structure, homotetramer. Requires Mn(2+) as cofactor. The cofactor is Mg(2+). Co(2+) serves as cofactor. It depends on K(+) as a cofactor.

Its subcellular location is the cytoplasm. It carries out the reaction L-methionine + ATP + H2O = S-adenosyl-L-methionine + phosphate + diphosphate. It functions in the pathway amino-acid biosynthesis; S-adenosyl-L-methionine biosynthesis; S-adenosyl-L-methionine from L-methionine: step 1/1. In terms of biological role, catalyzes the formation of S-adenosylmethionine from methionine and ATP. The reaction comprises two steps that are both catalyzed by the same enzyme: formation of S-adenosylmethionine (AdoMet) and triphosphate, and subsequent hydrolysis of the triphosphate. This chain is S-adenosylmethionine synthase (METK-1), found in Ostreococcus lucimarinus (strain CCE9901).